Reading from the N-terminus, the 840-residue chain is MSKYEFIKIEKKWQEFWDNNKTYKVEEDPSIPKEKRLYILDMFPYPSANGLHVGHPEGYTATDIFGRYKLLNGFHVLHPIGFDSFGLPAENYAIQTGTHPQKSTEENINKFKKQIKALGFAYDWDREIRTHEENYYKWTQWIFLQLYKKGLAYVKEMPVWYCPELGTVLANEEIIQTSDGPKSERGSYSVEKKYLRQWVLKITKYAERLLDDLEELEWPESVKEMQRNWIGKSTGVEIEFEIEGHSDKIKVFTTRPDTIFGITYLVIAPENKLIEKITKNNFKQNVLKYVKHEELKSDLNRTSLEKDKSGVFTGSYAFHPITNEKIPIWVGSYVLGTYGTGAVMGVPAHDERDFQFAKKYQLKILPVISKSGKNEILEKAFVDDGISINSPNEFNNLKNSEVKDKVIKWLTKNKKGKEKVAYKLRDWIFSRQRYWGEPIPILFDKLGNAIPLEENDLPLKLPEIANYKPSGTGESPLSRIKDWVNVKDMGFTRETNTMPQWAGSCWYYLRYLDPKNSKEFANKKKIEYWMPVDLYIGGAEHTVLHLLYSRFWHKVLYDLGYVNTKEPFKKLINQGIITSFSYQKENGVLIPNDQVIEKDNKFFDKKDNKEVTQVIAKMSKSLKNVINPDDIIKEFGADSMRIYEMFMGPLTDSKPWNTKGIIGVFRFLNKIWNLREKELSKENPPREIISELHKVIKKVTEDTEKLNFNTAISAMMIFINELLKYEKNYLNIFKPFIIILSPYAPHLAEELWEYIGELPSLFKNSKWPKFDESLIIKGKKEIVLQINGKIKDKILLNKETGEKELKEIAMENSKIKSNLLNKKIVKIIVIKNKLVNIVIK.

Positions 44–55 match the 'HIGH' region motif; it reads PYPSANGLHVGH. The short motif at 617–621 is the 'KMSKS' region element; the sequence is KMSKS. Residue K620 coordinates ATP.

It belongs to the class-I aminoacyl-tRNA synthetase family.

It localises to the cytoplasm. The catalysed reaction is tRNA(Leu) + L-leucine + ATP = L-leucyl-tRNA(Leu) + AMP + diphosphate. The polypeptide is Leucine--tRNA ligase (Borreliella burgdorferi (strain ATCC 35210 / DSM 4680 / CIP 102532 / B31) (Borrelia burgdorferi)).